A 49-amino-acid polypeptide reads, in one-letter code: Sperm protamine P1 (49 aa).

The segment at 1 to 49 (MARYRCCRSHSRSRCRRRRRRSRRRRRRSCGRRRRAGYRRYTVRYRRRR) is disordered.

The protein belongs to the protamine P1 family. As to expression, testis.

Its subcellular location is the nucleus. It is found in the chromosome. Functionally, protamines substitute for histones in the chromatin of sperm during the haploid phase of spermatogenesis. They compact sperm DNA into a highly condensed, stable and inactive complex. This Macronycteris commersonii (Commerson's roundleaf bat) protein is Sperm protamine P1 (PRM1).